A 167-amino-acid chain; its full sequence is MASAEPLTALSRWYLYAIHGYFCEVMFTAAWEFVVNLNWKFPGVTSVWALFIYGTSILIVERMYLRLRGRCPLLLRCLIYTLWTYLWEFTTGFILRQFNACPWDYSQFDFDFMGLITLEYAVPWFCGALIMEQFIIRNTLRLRFDKDAEPGEPSGALALANGHVKTD.

Over Met-1–Tyr-14 the chain is Cytoplasmic. A helical transmembrane segment spans residues Leu-15–Val-35. Residues Asn-36 to Lys-40 lie on the Extracellular side of the membrane. A helical membrane pass occupies residues Phe-41–Glu-61. The Cytoplasmic segment spans residues Arg-62 to Leu-73. A helical transmembrane segment spans residues Leu-74 to Ile-94. The Extracellular segment spans residues Leu-95–Asp-109. The helical transmembrane segment at Phe-110–Ile-130 threads the bilayer. Topologically, residues Met-131–Asp-167 are cytoplasmic.

This sequence belongs to the TMEM229 family.

Its subcellular location is the membrane. This is Transmembrane protein 229B (TMEM229B) from Homo sapiens (Human).